A 341-amino-acid chain; its full sequence is tRNA N6-adenosine threonylcarbamoyltransferase (341 aa).

Residues H115 and H119 each coordinate Fe cation. Substrate is bound by residues 137–141, D170, G183, D187, and N276; that span reads IVSGG. Fe cation is bound at residue D304.

Belongs to the KAE1 / TsaD family. Requires Fe(2+) as cofactor.

The protein resides in the cytoplasm. The catalysed reaction is L-threonylcarbamoyladenylate + adenosine(37) in tRNA = N(6)-L-threonylcarbamoyladenosine(37) in tRNA + AMP + H(+). In terms of biological role, required for the formation of a threonylcarbamoyl group on adenosine at position 37 (t(6)A37) in tRNAs that read codons beginning with adenine. Is involved in the transfer of the threonylcarbamoyl moiety of threonylcarbamoyl-AMP (TC-AMP) to the N6 group of A37, together with TsaE and TsaB. TsaD likely plays a direct catalytic role in this reaction. In Staphylococcus aureus (strain USA300), this protein is tRNA N6-adenosine threonylcarbamoyltransferase.